We begin with the raw amino-acid sequence, 457 residues long: Siroheme synthase (457 aa).

The tract at residues 1 to 204 (MDHLPIFCQL…ADEKAVNATT (204 aa)) is precorrin-2 dehydrogenase /sirohydrochlorin ferrochelatase. NAD(+)-binding positions include 22–23 (DV) and 43–44 (LN). S128 carries the phosphoserine modification. The uroporphyrinogen-III C-methyltransferase stretch occupies residues 216-457 (GEVVLVGAGP…RDKLNWFSNH (242 aa)). P225 provides a ligand contact to S-adenosyl-L-methionine. The active-site Proton acceptor is the D248. K270 (proton donor) is an active-site residue. S-adenosyl-L-methionine-binding positions include 301 to 303 (GGD), I306, 331 to 332 (TA), M382, and G411.

In the N-terminal section; belongs to the precorrin-2 dehydrogenase / sirohydrochlorin ferrochelatase family. The protein in the C-terminal section; belongs to the precorrin methyltransferase family.

The catalysed reaction is uroporphyrinogen III + 2 S-adenosyl-L-methionine = precorrin-2 + 2 S-adenosyl-L-homocysteine + H(+). It catalyses the reaction precorrin-2 + NAD(+) = sirohydrochlorin + NADH + 2 H(+). The enzyme catalyses siroheme + 2 H(+) = sirohydrochlorin + Fe(2+). It functions in the pathway cofactor biosynthesis; adenosylcobalamin biosynthesis; precorrin-2 from uroporphyrinogen III: step 1/1. It participates in cofactor biosynthesis; adenosylcobalamin biosynthesis; sirohydrochlorin from precorrin-2: step 1/1. The protein operates within porphyrin-containing compound metabolism; siroheme biosynthesis; precorrin-2 from uroporphyrinogen III: step 1/1. Its pathway is porphyrin-containing compound metabolism; siroheme biosynthesis; siroheme from sirohydrochlorin: step 1/1. It functions in the pathway porphyrin-containing compound metabolism; siroheme biosynthesis; sirohydrochlorin from precorrin-2: step 1/1. In terms of biological role, multifunctional enzyme that catalyzes the SAM-dependent methylations of uroporphyrinogen III at position C-2 and C-7 to form precorrin-2 via precorrin-1. Then it catalyzes the NAD-dependent ring dehydrogenation of precorrin-2 to yield sirohydrochlorin. Finally, it catalyzes the ferrochelation of sirohydrochlorin to yield siroheme. The protein is Siroheme synthase of Salmonella paratyphi A (strain ATCC 9150 / SARB42).